The primary structure comprises 646 residues: Zinc finger protein 493 (646 aa).

The segment at 26 to 48 (FQCDKYVKVFHKLLNSNRHNTKH) adopts a C2H2-type 1; degenerate zinc-finger fold. 2 consecutive C2H2-type zinc fingers follow at residues 54-76 (FKCKKCGKSFCMLLHLCQHKRIH) and 82-104 (YRCEECGKAFIWFSTLTRHRRVH). Residues 109 to 131 (SYKYECGKSFNQDSNLTTHKRIH) form a C2H2-type 4; degenerate zinc finger. Residues 137–159 (YKCEECGTSFYQFSYLTRHKLIH) form a C2H2-type 5 zinc finger. The C2H2-type 6; degenerate zinc-finger motif lies at 165-187 (YKCEQYGKTFNQSSTLTGHKIIH). A C2H2-type 7; degenerate zinc finger spans residues 193-215 (YKCEECGKAFSIFSTPTKHKIIH). A C2H2-type 8; degenerate zinc finger spans residues 221-243 (HRCEEYCKAYKESSHLTTHKRIH). 14 consecutive C2H2-type zinc fingers follow at residues 249-271 (YKCEECGKAFSIFSTLTKHKIIH), 277-299 (HRCEECGKAYKESSHLTTHKRIH), 305-327 (YKCEECGKTFSVFSILTKHKIIH), 333-355 (YKCEECGKAFKRSSTLTKHRIIH), 361-383 (YKCEECGKAFNQSSTLSIHKIIH), 389-411 (YKCEECGKAFKRSSTLTIHKMIH), 417-439 (YKCEECGKAFNRSSHLTTHKRIH), 445-467 (YKCKECGKSFSVFSTLTKHKIIH), 473-495 (YKCEECGKAFNRSSILSIHKKIH), 501-523 (YKCEECGKAFKRSSHLAGHKQIH), 529-551 (YKCEECGKAFSIFSTLTKHKIIH), 557-579 (YKCEKCGKTFYRFSNLNTHKIIH), 585-607 (CKCEECGKAFNHSSNLIKHKLIH), and 613-635 (YKCEACGKAFRRSSHLSRHKIIH).

It localises to the nucleus. Its function is as follows. May be involved in transcriptional regulation. In Homo sapiens (Human), this protein is Zinc finger protein 493 (ZNF493).